A 272-amino-acid polypeptide reads, in one-letter code: Shikimate dehydrogenase (NADP(+)) (272 aa).

Shikimate contacts are provided by residues 14–16 (SKS) and T61. K65 acts as the Proton acceptor in catalysis. E77 lines the NADP(+) pocket. N86 and D102 together coordinate shikimate. Residues 126 to 130 (GAGGA), 149 to 154 (NRTVSR), and M213 contribute to the NADP(+) site. Residue Y215 coordinates shikimate. Residue G237 coordinates NADP(+).

The protein belongs to the shikimate dehydrogenase family. In terms of assembly, homodimer.

The enzyme catalyses shikimate + NADP(+) = 3-dehydroshikimate + NADPH + H(+). The protein operates within metabolic intermediate biosynthesis; chorismate biosynthesis; chorismate from D-erythrose 4-phosphate and phosphoenolpyruvate: step 4/7. Involved in the biosynthesis of the chorismate, which leads to the biosynthesis of aromatic amino acids. Catalyzes the reversible NADPH linked reduction of 3-dehydroshikimate (DHSA) to yield shikimate (SA). The polypeptide is Shikimate dehydrogenase (NADP(+)) (Escherichia coli O45:K1 (strain S88 / ExPEC)).